The primary structure comprises 442 residues: tRNA-2-methylthio-N(6)-dimethylallyladenosine synthase (442 aa).

Residues 2–120 (KKVFIRTFGC…LPKMIVDKET (119 aa)) form the MTTase N-terminal domain. The [4Fe-4S] cluster site is built by cysteine 11, cysteine 49, cysteine 83, cysteine 157, cysteine 161, and cysteine 164. The Radical SAM core domain occupies 143–375 (RVEGGAAFVS…NEVIEAETAR (233 aa)). The TRAM domain maps to 378 to 441 (QTMVGTVQRC…TFSLRGKVVE (64 aa)).

Belongs to the methylthiotransferase family. MiaB subfamily. Monomer. [4Fe-4S] cluster serves as cofactor.

The protein resides in the cytoplasm. The enzyme catalyses N(6)-dimethylallyladenosine(37) in tRNA + (sulfur carrier)-SH + AH2 + 2 S-adenosyl-L-methionine = 2-methylsulfanyl-N(6)-dimethylallyladenosine(37) in tRNA + (sulfur carrier)-H + 5'-deoxyadenosine + L-methionine + A + S-adenosyl-L-homocysteine + 2 H(+). In terms of biological role, catalyzes the methylthiolation of N6-(dimethylallyl)adenosine (i(6)A), leading to the formation of 2-methylthio-N6-(dimethylallyl)adenosine (ms(2)i(6)A) at position 37 in tRNAs that read codons beginning with uridine. The polypeptide is tRNA-2-methylthio-N(6)-dimethylallyladenosine synthase (Neisseria meningitidis serogroup B (strain ATCC BAA-335 / MC58)).